The following is a 249-amino-acid chain: 2,3-bisphosphoglycerate-dependent phosphoglycerate mutase (249 aa).

Substrate is bound by residues 7 to 14 (RHGESEWN), 20 to 21 (TG), R59, 86 to 89 (ERHY), K97, 113 to 114 (RR), and 182 to 183 (GN). H8 acts as the Tele-phosphohistidine intermediate in catalysis. E86 (proton donor/acceptor) is an active-site residue.

Belongs to the phosphoglycerate mutase family. BPG-dependent PGAM subfamily.

The enzyme catalyses (2R)-2-phosphoglycerate = (2R)-3-phosphoglycerate. Its pathway is carbohydrate degradation; glycolysis; pyruvate from D-glyceraldehyde 3-phosphate: step 3/5. Its function is as follows. Catalyzes the interconversion of 2-phosphoglycerate and 3-phosphoglycerate. This chain is 2,3-bisphosphoglycerate-dependent phosphoglycerate mutase, found in Lachnoclostridium phytofermentans (strain ATCC 700394 / DSM 18823 / ISDg) (Clostridium phytofermentans).